We begin with the raw amino-acid sequence, 512 residues long: ATP synthase subunit alpha 1 (512 aa).

Position 169-176 (169-176 (GDRQTGKT)) interacts with ATP.

This sequence belongs to the ATPase alpha/beta chains family. As to quaternary structure, F-type ATPases have 2 components, CF(1) - the catalytic core - and CF(0) - the membrane proton channel. CF(1) has five subunits: alpha(3), beta(3), gamma(1), delta(1), epsilon(1). CF(0) has four main subunits: a(1), b(1), b'(1) and c(9-12).

It localises to the cell inner membrane. It carries out the reaction ATP + H2O + 4 H(+)(in) = ADP + phosphate + 5 H(+)(out). Functionally, produces ATP from ADP in the presence of a proton gradient across the membrane. The alpha chain is a regulatory subunit. The chain is ATP synthase subunit alpha 1 from Cereibacter sphaeroides (strain ATCC 17029 / ATH 2.4.9) (Rhodobacter sphaeroides).